The following is a 631-amino-acid chain: Phosphomethylpyrimidine synthase (631 aa).

Substrate is bound by residues N239, M268, Y297, H333, S353–G355, D394–R397, and E433. H437 provides a ligand contact to Zn(2+). Y460 serves as a coordination point for substrate. Residue H501 participates in Zn(2+) binding. The [4Fe-4S] cluster site is built by C581, C584, and C589.

It belongs to the ThiC family. In terms of assembly, homodimer. The cofactor is [4Fe-4S] cluster.

It carries out the reaction 5-amino-1-(5-phospho-beta-D-ribosyl)imidazole + S-adenosyl-L-methionine = 4-amino-2-methyl-5-(phosphooxymethyl)pyrimidine + CO + 5'-deoxyadenosine + formate + L-methionine + 3 H(+). It participates in cofactor biosynthesis; thiamine diphosphate biosynthesis. Its function is as follows. Catalyzes the synthesis of the hydroxymethylpyrimidine phosphate (HMP-P) moiety of thiamine from aminoimidazole ribotide (AIR) in a radical S-adenosyl-L-methionine (SAM)-dependent reaction. The sequence is that of Phosphomethylpyrimidine synthase from Escherichia fergusonii (strain ATCC 35469 / DSM 13698 / CCUG 18766 / IAM 14443 / JCM 21226 / LMG 7866 / NBRC 102419 / NCTC 12128 / CDC 0568-73).